A 173-amino-acid chain; its full sequence is UPF0316 protein Bsph_0745 (173 aa).

Helical transmembrane passes span 4–24 (IVLI…RTIF), 31–51 (FLAA…LSLV), and 58–78 (MLAM…GAKI).

This sequence belongs to the UPF0316 family.

Its subcellular location is the cell membrane. The chain is UPF0316 protein Bsph_0745 from Lysinibacillus sphaericus (strain C3-41).